Here is a 112-residue protein sequence, read N- to C-terminus: Signal peptidase complex-like protein DTM1 (112 aa).

Positions 1–25 are cleaved as a signal peptide; sequence MGRDEMLRRSLVALAAAVVVTGVVT. The next 2 helical transmembrane spans lie at 33–53 and 92–112; these read ATYGFGILAIAGVLLPDWEFF and MAMLTTIYGFGLYKWWMYVSS.

This sequence belongs to the SPCS1 family.

The protein localises to the endoplasmic reticulum membrane. Its function is as follows. Functions in tapetum development during early meiosis. May play a role in the endoplasmic reticulum (ER) membrane in the early stages of tapetum development in anthers. Seems to function after MSP1 and before UDT1. The protein is Signal peptidase complex-like protein DTM1 of Oryza sativa subsp. japonica (Rice).